The following is a 336-amino-acid chain: UPF0065 protein in tcbD-tcbE intergenic region (336 aa).

The first 32 residues, 1 to 32 (MHSSKCPDLANIGRRRVLAGIALAMTTSSTRA), serve as a signal peptide directing secretion.

The protein belongs to the UPF0065 (bug) family.

The protein localises to the periplasm. In Pseudomonas sp. (strain P51), this protein is UPF0065 protein in tcbD-tcbE intergenic region.